A 540-amino-acid chain; its full sequence is Chaperonin GroEL 1 (540 aa).

ATP contacts are provided by residues 29–32, 86–90, G413, 478–480, and D494; these read TLGP, DGTTT, and NAA.

The protein belongs to the chaperonin (HSP60) family. In terms of assembly, forms a cylinder of 14 subunits composed of two heptameric rings stacked back-to-back. Interacts with the co-chaperonin GroES.

The protein resides in the cytoplasm. The catalysed reaction is ATP + H2O + a folded polypeptide = ADP + phosphate + an unfolded polypeptide.. Functionally, together with its co-chaperonin GroES, plays an essential role in assisting protein folding. The GroEL-GroES system forms a nano-cage that allows encapsulation of the non-native substrate proteins and provides a physical environment optimized to promote and accelerate protein folding. This is Chaperonin GroEL 1 from Mycobacterium sp. (strain JLS).